A 314-amino-acid chain; its full sequence is Pantothenate synthetase (314 aa).

43–50 (MGALHEGH) is an ATP binding site. The active-site Proton donor is the His50. Gln75 is a (R)-pantoate binding site. Beta-alanine is bound at residue Gln75. A disordered region spans residues 112 to 131 (MYPDGTRTSVHPGPLGDDLE). ATP is bound at residue 161-164 (GEKD). Gln167 is a binding site for (R)-pantoate. ATP is bound by residues Val190 and 198-201 (LSSR).

This sequence belongs to the pantothenate synthetase family. In terms of assembly, homodimer.

The protein resides in the cytoplasm. It catalyses the reaction (R)-pantoate + beta-alanine + ATP = (R)-pantothenate + AMP + diphosphate + H(+). Its pathway is cofactor biosynthesis; (R)-pantothenate biosynthesis; (R)-pantothenate from (R)-pantoate and beta-alanine: step 1/1. Functionally, catalyzes the condensation of pantoate with beta-alanine in an ATP-dependent reaction via a pantoyl-adenylate intermediate. This is Pantothenate synthetase from Mycolicibacterium smegmatis (strain ATCC 700084 / mc(2)155) (Mycobacterium smegmatis).